The following is a 415-amino-acid chain: Zona pellucida-like domain-containing protein 1 (415 aa).

The first 19 residues, 1 to 19 (MEQIRLLLLLTIRVLSGSA), serve as a signal peptide directing secretion. The Extracellular portion of the chain corresponds to 20 to 372 (QFNGYNCDAN…PPFQLNAITS (353 aa)). Residues 43–320 (YCGVQAITMK…PICSHRERRD (278 aa)) form the ZP domain. Disulfide bonds link C44/C155 and C79/C104. N164 carries an N-linked (GlcNAc...) asparagine glycan. Intrachain disulfides connect C235-C296 and C255-C313. A disordered region spans residues 323 to 359 (RRTTWSSQSSSGSAVLSAGPIITRSDETPTNNSQLGS). The segment covering 328-339 (SSQSSSGSAVLS) has biased composition (low complexity). Polar residues predominate over residues 350 to 359 (TPTNNSQLGS). A helical membrane pass occupies residues 373-393 (ALISGMVILGVMSFSLLVCPL). Over 394 to 415 (ALLHRKGPTSLVLNGIRNPVFD) the chain is Cytoplasmic.

Proteolytically cleaved before the transmembrane segment to yield the secreted form found in the extracellular matrix of the cupula.

The protein resides in the cytoplasmic vesicle membrane. It is found in the secreted. Its subcellular location is the extracellular space. It localises to the extracellular matrix. Functionally, glycoprotein which is a component of the gelatinous extracellular matrix in the cupulae of the vestibular organ. This Macaca fascicularis (Crab-eating macaque) protein is Zona pellucida-like domain-containing protein 1 (ZPLD1).